The sequence spans 201 residues: SDPDPLQDFCVADLDGKAVSVNGHTCKPMSEAGDDFLFSSKLTKAGNTSTPNGSAVTELDVAEWPGTNTLGVSMNRVDFAPGGTNPPHIHPRATEIGMVMKGELLVGILGSLDSGNKLYSRVVRAGETFVIPRGLMHFQFNVGKTEAYMVVSFNSQNPGIVFVPLTLFGSDPPIPTPVLTKALRVEAGVVELLKSKFAGGS.

A disulfide bond links Cys-10 and Cys-26. Residues 40 to 191 (SKLTKAGNTS…ALRVEAGVVE (152 aa)) form the Cupin type-1 domain. N-linked (GlcNAc...) asparagine glycosylation is present at Asn-47. 2 residues coordinate oxalate: Asn-75 and Asn-85. Residues His-88, His-90, Glu-95, and His-137 each coordinate Mn(2+). Residues His-90 and Glu-95 each contribute to the oxalate site.

The protein belongs to the germin family. In terms of assembly, homo hexamer; a trimer of dimers. In terms of processing, glycosylated. A form called G contains antennary GlcNAc residues, whereas a form called G' lacks antennary GlcNAc residues in its otherwise identical glycans.

It is found in the secreted. Its subcellular location is the extracellular space. The protein localises to the apoplast. The protein resides in the cell wall. It catalyses the reaction oxalate + O2 + 2 H(+) = H2O2 + 2 CO2. Releases hydrogen peroxide in the apoplast which may be important for cross-linking reactions in the cell wall biochemistry. May play an important role in several aspects of plant growth and defense mechanisms. This is Oxalate oxidase 1 from Hordeum vulgare (Barley).